We begin with the raw amino-acid sequence, 470 residues long: Flotillin-like protein 1 (470 aa).

Cysteine 35 carries the S-palmitoyl cysteine lipid modification. Positions 305 to 354 (EYETKVQEANWELYNKQKQAEAVLYEKQKQAEAQKAQADAAFYSKQKEAE) form a coiled coil.

The protein belongs to the band 7/mec-2 family. Flotillin subfamily. May be palmitoylated.

Its subcellular location is the cell membrane. It localises to the membrane. It is found in the caveola. Functionally, may act as a scaffolding protein within caveolar membranes, functionally participating in formation of caveolae or caveolae-like vesicles. The sequence is that of Flotillin-like protein 1 (FLOT1) from Arabidopsis thaliana (Mouse-ear cress).